The sequence spans 119 residues: Beta-2-microglobulin (119 aa).

Residues 1-20 form the signal peptide; sequence MARFVAVALLVLLSLSGLEA. The Ig-like C1-type domain occupies 25 to 114; it reads PKIQVYSRHP…VTFSTPKTVK (90 aa). Cys45 and Cys100 are disulfide-bonded.

Belongs to the beta-2-microglobulin family. Heterodimer of an alpha chain and a beta chain. Beta-2-microglobulin is the beta-chain of major histocompatibility complex class I molecules.

It is found in the secreted. In terms of biological role, component of the class I major histocompatibility complex (MHC). Involved in the presentation of peptide antigens to the immune system. The chain is Beta-2-microglobulin (B2M) from Plecturocebus moloch (Dusky titi monkey).